The chain runs to 314 residues: GTP cyclohydrolase FolE2 (314 aa).

Positions 290–314 (DASAWSAPQAAAPDQQESFATGNER) are disordered. The span at 291-304 (ASAWSAPQAAAPDQ) shows a compositional bias: low complexity. Residues 305-314 (QESFATGNER) are compositionally biased toward polar residues.

The protein belongs to the GTP cyclohydrolase IV family.

The catalysed reaction is GTP + H2O = 7,8-dihydroneopterin 3'-triphosphate + formate + H(+). It functions in the pathway cofactor biosynthesis; 7,8-dihydroneopterin triphosphate biosynthesis; 7,8-dihydroneopterin triphosphate from GTP: step 1/1. In terms of biological role, converts GTP to 7,8-dihydroneopterin triphosphate. The protein is GTP cyclohydrolase FolE2 of Pseudomonas putida (strain ATCC 47054 / DSM 6125 / CFBP 8728 / NCIMB 11950 / KT2440).